Here is a 279-residue protein sequence, read N- to C-terminus: Glycerol uptake facilitator protein (279 aa).

The Cytoplasmic portion of the chain corresponds to 1–8 (MTTAAPTP). A helical transmembrane segment spans residues 9–37 (SLFGQCLAEFLGTALLIFFGTGCVAALKV). The Periplasmic segment spans residues 38 to 42 (AGASF). The chain crosses the membrane as a helical span at residues 43 to 63 (GLWEISIIWGVGVSMAIYLSA). At 64–66 (GVS) the chain is on the cytoplasmic side. An intramembrane segment occupies 67–70 (GAHL). An NPA 1 motif is present at residues 71–73 (NPA). Residues 71-81 (NPAVSIALWLF) constitute an intramembrane region (helical). At 82 to 87 (AGFEGR) the chain is on the cytoplasmic side. Residues 88 to 111 (KLPFYITAQVAGAFCAAALVYTLY) traverse the membrane as a helical segment. Residues 112 to 146 (SSLFIEFEQAQNIVRGSQDSLALASVFSTYPHPAL) lie on the Periplasmic side of the membrane. Residues 147-172 (SVGQAFLVEVVITAILMAVIMALTDD) form a helical membrane-spanning segment. The Cytoplasmic segment spans residues 173-180 (GNGLPRGP). Residues 181–197 (LAPLLIGLLIAVIGSAM) traverse the membrane as a helical segment. The Periplasmic segment spans residues 198-201 (GPLT). An intramembrane segment occupies 202 to 205 (GFAM). The short motif at 206–208 (NPA) is the NPA 2 element. The segment at residues 206-219 (NPARDFGPKLMTYL) is an intramembrane region (helical). The Periplasmic portion of the chain corresponds to 220–234 (AGWGPIAFTGGREIP). Residues 235-257 (YFLVPIFAPILGACLGAGGYRVL) form a helical membrane-spanning segment. Residues 258–279 (IARHLPSAAAPAEAEPEKVRAS) are Cytoplasmic-facing.

It belongs to the MIP/aquaporin (TC 1.A.8) family.

The protein localises to the cell inner membrane. It carries out the reaction glycerol(in) = glycerol(out). Functionally, mediates glycerol diffusion across the cytoplasmic membrane via a pore-type mechanism. The polypeptide is Glycerol uptake facilitator protein (glpF) (Pseudomonas aeruginosa (strain ATCC 15692 / DSM 22644 / CIP 104116 / JCM 14847 / LMG 12228 / 1C / PRS 101 / PAO1)).